A 216-amino-acid chain; its full sequence is MQEFIAFNEQRAEIYWWMSSLLARELTNEDVTEYHGDEMFTFLSGLGMTPELKEPVEAFRNAINTLKTREDAQLELAADFCGLFLSTPKSGALPYASIYVGESGLLNDKPAQDMNVLMEEYGIAQRKEFNEPADHIAVELDFMGNLIIQANQELDEEKREALMQAQLAFVNDMLLNWIPAFAQSCKARDDFGFYTASVNLLVAFCQLDAAFLLGEE.

The protein belongs to the TorD/DmsD family. TorD subfamily.

It is found in the cytoplasm. Involved in the biogenesis of TorA. Acts on TorA before the insertion of the molybdenum cofactor and, as a result, probably favors a conformation of the apoenzyme that is competent for acquiring the cofactor. The protein is Chaperone protein TorD of Photobacterium profundum (strain SS9).